The following is a 264-amino-acid chain: Ribosomal RNA small subunit methyltransferase A (264 aa).

S-adenosyl-L-methionine contacts are provided by asparagine 15, isoleucine 17, glycine 42, glutamate 64, aspartate 90, and asparagine 109.

The protein belongs to the class I-like SAM-binding methyltransferase superfamily. rRNA adenine N(6)-methyltransferase family. RsmA subfamily.

The protein localises to the cytoplasm. The catalysed reaction is adenosine(1518)/adenosine(1519) in 16S rRNA + 4 S-adenosyl-L-methionine = N(6)-dimethyladenosine(1518)/N(6)-dimethyladenosine(1519) in 16S rRNA + 4 S-adenosyl-L-homocysteine + 4 H(+). Specifically dimethylates two adjacent adenosines (A1518 and A1519) in the loop of a conserved hairpin near the 3'-end of 16S rRNA in the 30S particle. May play a critical role in biogenesis of 30S subunits. The protein is Ribosomal RNA small subunit methyltransferase A of Wolbachia pipientis subsp. Culex pipiens (strain wPip).